The chain runs to 248 residues: Probable transcriptional regulatory protein PSPA7_4544 (248 aa).

It belongs to the TACO1 family.

It is found in the cytoplasm. This chain is Probable transcriptional regulatory protein PSPA7_4544, found in Pseudomonas paraeruginosa (strain DSM 24068 / PA7) (Pseudomonas aeruginosa (strain PA7)).